The following is a 344-amino-acid chain: GTP 3',8-cyclase (344 aa).

The Radical SAM core domain maps to 19-245 (PFGRAVTYLR…DIPYRTGGPA (227 aa)). Position 28 (Arg-28) interacts with GTP. [4Fe-4S] cluster-binding residues include Cys-35 and Cys-39. Tyr-41 lines the S-adenosyl-L-methionine pocket. Residue Cys-42 coordinates [4Fe-4S] cluster. Position 77 (Arg-77) interacts with GTP. Position 81 (Gly-81) interacts with S-adenosyl-L-methionine. Thr-111 serves as a coordination point for GTP. Ser-135 is a binding site for S-adenosyl-L-methionine. Lys-171 is a GTP binding site. S-adenosyl-L-methionine is bound at residue Met-205. [4Fe-4S] cluster is bound by residues Cys-268 and Cys-271. 273 to 275 (RVR) provides a ligand contact to GTP. Cys-285 is a [4Fe-4S] cluster binding site.

It belongs to the radical SAM superfamily. MoaA family. Monomer and homodimer. [4Fe-4S] cluster is required as a cofactor.

It catalyses the reaction GTP + AH2 + S-adenosyl-L-methionine = (8S)-3',8-cyclo-7,8-dihydroguanosine 5'-triphosphate + 5'-deoxyadenosine + L-methionine + A + H(+). The protein operates within cofactor biosynthesis; molybdopterin biosynthesis. Functionally, catalyzes the cyclization of GTP to (8S)-3',8-cyclo-7,8-dihydroguanosine 5'-triphosphate. The chain is GTP 3',8-cyclase from Brucella ovis (strain ATCC 25840 / 63/290 / NCTC 10512).